The following is a 266-amino-acid chain: MAEISATAYAVQVDDLTLAYRQKPVLWDVDVRIPEGVIEAIIGPNGAGKSTLLKAIMGLLPLASGEVRVFGRPFSKERRRVAYVPQRSAVDWDFPTTVFDVVLMGSYGSLGWILRPGKREKARAREAIEEVGMGAFLDRQISELSGGQQQRVFLARALVQDADLYFMDEPFQGVDAATEQAIVTLLKTLKGRGKTLLVVHHDLQTVAEYFDRVLLLNVRVIAEGAVVSAFTEEYVQRAYGGRISSTLFPRGNKEDVHDARAHASVL.

The region spanning 11 to 243 (VQVDDLTLAY…YVQRAYGGRI (233 aa)) is the ABC transporter domain. 43–50 (GPNGAGKS) serves as a coordination point for ATP.

The protein belongs to the ABC transporter superfamily.

Part of an ATP-driven transport system TroABCD for zinc. The polypeptide is Zinc transport system ATP-binding protein TroB (troB) (Treponema pallidum (strain Nichols)).